Here is a 230-residue protein sequence, read N- to C-terminus: Ion-translocating oxidoreductase complex subunit E (230 aa).

6 helical membrane passes run 18 to 38 (ALVQLLGLCPLLAVTSTATNA), 39 to 59 (LGLGLATTLVLTLTNLTVSAL), 63 to 83 (TPAEIRIPIYVMIIASVVSAV), 86 to 106 (LINAYAFGLYQSLGIFIPLIV), 125 to 145 (WLSALDGFSIGMGATGAMFVL), and 182 to 202 (PFLLAMLPPGAFIGLGLMLAV).

Belongs to the NqrDE/RnfAE family. As to quaternary structure, the complex is composed of six subunits: RsxA, RsxB, RsxC, RsxD, RsxE and RsxG.

It localises to the cell inner membrane. Its function is as follows. Part of a membrane-bound complex that couples electron transfer with translocation of ions across the membrane. Required to maintain the reduced state of SoxR. This is Ion-translocating oxidoreductase complex subunit E from Salmonella newport (strain SL254).